The following is a 266-amino-acid chain: N-acetylneuraminate lyase B (266 aa).

Thr-51 and Thr-52 together coordinate aceneuramate. Residue Tyr-143 is the Proton donor of the active site. The Schiff-base intermediate with substrate role is filled by Lys-173. Aceneuramate is bound by residues Ser-175, Gly-197, Asp-199, Glu-200, and Ser-216.

It belongs to the DapA family. NanA subfamily. In terms of assembly, homotetramer.

It is found in the cytoplasm. It catalyses the reaction aceneuramate = aldehydo-N-acetyl-D-mannosamine + pyruvate. It participates in amino-sugar metabolism; N-acetylneuraminate degradation. Its function is as follows. Catalyzes the cleavage of N-acetylneuraminic acid (sialic acid) to form pyruvate and N-acetylmannosamine via a Schiff base intermediate. It prevents sialic acids from being recycled and returning to the cell surface. Involved in the N-glycolylneuraminic acid (Neu5Gc) degradation pathway. This chain is N-acetylneuraminate lyase B (npl-b), found in Xenopus laevis (African clawed frog).